The following is a 610-amino-acid chain: Elongation factor 4 (610 aa).

In terms of domain architecture, tr-type G spans 13–195 (SHIRNFSIVA…AIVHKLPAPK (183 aa)). GTP is bound by residues 25-30 (DHGKST) and 142-145 (NKID).

The protein belongs to the TRAFAC class translation factor GTPase superfamily. Classic translation factor GTPase family. LepA subfamily.

It is found in the cell inner membrane. It catalyses the reaction GTP + H2O = GDP + phosphate + H(+). In terms of biological role, required for accurate and efficient protein synthesis under certain stress conditions. May act as a fidelity factor of the translation reaction, by catalyzing a one-codon backward translocation of tRNAs on improperly translocated ribosomes. Back-translocation proceeds from a post-translocation (POST) complex to a pre-translocation (PRE) complex, thus giving elongation factor G a second chance to translocate the tRNAs correctly. Binds to ribosomes in a GTP-dependent manner. The sequence is that of Elongation factor 4 from Rhizobium etli (strain ATCC 51251 / DSM 11541 / JCM 21823 / NBRC 15573 / CFN 42).